A 214-amino-acid chain; its full sequence is Thymidylate kinase (214 aa).

Position 13 to 20 (13 to 20 (GPDACGKS)) interacts with ATP.

This sequence belongs to the thymidylate kinase family.

The catalysed reaction is dTMP + ATP = dTDP + ADP. Functionally, phosphorylation of dTMP to form dTDP in both de novo and salvage pathways of dTTP synthesis. This Malacoplasma penetrans (strain HF-2) (Mycoplasma penetrans) protein is Thymidylate kinase.